The primary structure comprises 257 residues: Cytochrome b561 domain-containing protein At2g30890 (257 aa).

The first 21 residues, 1-21 (MEIHHQLLVSLLFLLLPLCSS), serve as a signal peptide directing secretion. Positions 22-219 (QENTRSLAID…LFQDKWSYIQ (198 aa)) constitute a Cytochrome b561 domain. A run of 5 helical transmembrane segments spans residues 55 to 75 (VHGF…IISI), 91 to 111 (LFFL…IGAV), 125 to 145 (HQQL…LGFL), 157 to 177 (WFVG…INIY), and 191 to 211 (ANLW…VYLF). Positions 56, 95, 125, and 161 each coordinate heme b. The disordered stretch occupies residues 235 to 257 (NISTAETGHGYEVEESKPELEKC). Positions 243–257 (HGYEVEESKPELEKC) are enriched in basic and acidic residues.

Requires heme b as cofactor.

It is found in the membrane. This Arabidopsis thaliana (Mouse-ear cress) protein is Cytochrome b561 domain-containing protein At2g30890.